Here is a 214-residue protein sequence, read N- to C-terminus: Large ribosomal subunit protein uL3 (214 aa).

Gln-151 is modified (N5-methylglutamine).

This sequence belongs to the universal ribosomal protein uL3 family. In terms of assembly, part of the 50S ribosomal subunit. Forms a cluster with proteins L14 and L19. Methylated by PrmB.

In terms of biological role, one of the primary rRNA binding proteins, it binds directly near the 3'-end of the 23S rRNA, where it nucleates assembly of the 50S subunit. The polypeptide is Large ribosomal subunit protein uL3 (Magnetococcus marinus (strain ATCC BAA-1437 / JCM 17883 / MC-1)).